The following is a 199-amino-acid chain: NAD(P)H dehydrogenase (quinone) (199 aa).

Residues valine 4–valine 190 form the Flavodoxin-like domain. FMN contacts are provided by residues serine 10–valine 15 and threonine 78–tyrosine 80. Tryptophan 12 provides a ligand contact to NAD(+). Tryptophan 98 is a binding site for substrate. Residues serine 113–glycine 119 and histidine 134 contribute to the FMN site.

Belongs to the WrbA family. FMN serves as cofactor.

The catalysed reaction is a quinone + NADH + H(+) = a quinol + NAD(+). It carries out the reaction a quinone + NADPH + H(+) = a quinol + NADP(+). The protein is NAD(P)H dehydrogenase (quinone) of Methylorubrum extorquens (strain CM4 / NCIMB 13688) (Methylobacterium extorquens).